The chain runs to 132 residues: Small ribosomal subunit protein uS11 (132 aa).

Belongs to the universal ribosomal protein uS11 family. Part of the 30S ribosomal subunit. Interacts with proteins S7 and S18. Binds to IF-3.

Its function is as follows. Located on the platform of the 30S subunit, it bridges several disparate RNA helices of the 16S rRNA. Forms part of the Shine-Dalgarno cleft in the 70S ribosome. This Lachnoclostridium phytofermentans (strain ATCC 700394 / DSM 18823 / ISDg) (Clostridium phytofermentans) protein is Small ribosomal subunit protein uS11.